A 300-amino-acid chain; its full sequence is GTPase Era (300 aa).

The 169-residue stretch at 8 to 176 (RCGYVAIVGR…ESLIASHLPE (169 aa)) folds into the Era-type G domain. The interval 16–23 (GRPNVGKS) is G1. 16-23 (GRPNVGKS) provides a ligand contact to GTP. The interval 42-46 (QTTRH) is G2. A G3 region spans residues 63-66 (DTPG). GTP contacts are provided by residues 63 to 67 (DTPGM) and 125 to 128 (NKTD). The interval 125–128 (NKTD) is G4. Residues 155–157 (ISA) form a G5 region. The KH type-2 domain occupies 199-283 (VREKIMRQLG…MLNLWVKVKG (85 aa)).

It belongs to the TRAFAC class TrmE-Era-EngA-EngB-Septin-like GTPase superfamily. Era GTPase family. Monomer.

It is found in the cytoplasm. Its subcellular location is the cell inner membrane. In terms of biological role, an essential GTPase that binds both GDP and GTP, with rapid nucleotide exchange. Plays a role in 16S rRNA processing and 30S ribosomal subunit biogenesis and possibly also in cell cycle regulation and energy metabolism. The chain is GTPase Era from Pseudomonas syringae pv. tomato (strain ATCC BAA-871 / DC3000).